The sequence spans 167 residues: MIPYQEWHSQLQLLYDSQIFHNWALCQDVHLNDEKDGLLLRLIPTRQLQKNTERIENKLLSHIELYLTYSKVYNEPLLLLRIWEEKSIDGIPMTKLMLPTDIESLLDVQGKFQLGLDTIINLEGSVWYSFHPCDTSCIVGDQAEFMSTYLRRWVSIFIFSWLGYEDS.

C133 acts as the Glycyl thioester intermediate in catalysis.

Belongs to the ATG10 family. In terms of assembly, forms homooligomers. Interacts with ATG7 and ATG12.

The protein localises to the preautophagosomal structure membrane. Its function is as follows. E2-like enzyme required for the cytoplasm to vacuole transport (Cvt), autophagy and nucleophagy. Acts as an E2-like enzyme that catalyzes the conjugation of ATG12 to ATG5. ATG12 conjugation to ATG5 is required for proper localization of ATG8 to the preautophagosomal structure (PAS). Likely serves as an ATG5-recognition molecule. This chain is Ubiquitin-like-conjugating enzyme ATG10 (ATG10), found in Saccharomyces cerevisiae (strain YJM789) (Baker's yeast).